A 208-amino-acid chain; its full sequence is Dephospho-CoA kinase (208 aa).

The 197-residue stretch at 11-207 (VIGLTGGIAS…EYYLELAQHD (197 aa)) folds into the DPCK domain. 19–24 (ASGKSA) is an ATP binding site.

It belongs to the CoaE family.

The protein resides in the cytoplasm. It carries out the reaction 3'-dephospho-CoA + ATP = ADP + CoA + H(+). It participates in cofactor biosynthesis; coenzyme A biosynthesis; CoA from (R)-pantothenate: step 5/5. In terms of biological role, catalyzes the phosphorylation of the 3'-hydroxyl group of dephosphocoenzyme A to form coenzyme A. The sequence is that of Dephospho-CoA kinase from Hahella chejuensis (strain KCTC 2396).